A 477-amino-acid polypeptide reads, in one-letter code: ETS translocation variant 1 (477 aa).

S94 is subject to Phosphoserine. The tract at residues P128–T179 is disordered. Phosphoserine; by RPS6KA1 and RPS6KA5 occurs at positions 191 and 216. K317 participates in a covalent cross-link: Glycyl lysine isopeptide (Lys-Gly) (interchain with G-Cter in SUMO2). The ETS DNA-binding region spans L335–V415.

Belongs to the ETS family. Post-translationally, sumoylated. Phosphorylated at Ser-191 and Ser-216 by RPS6KA1 and RPS6KA5; phosphorylation activates transcriptional activity. In terms of tissue distribution, abundant in kidney. Moderate levels seen in the heart, brain, lung, embryo and lower levels seen in spleen, intestine, testis and thymus.

The protein localises to the nucleus. Functionally, transcriptional activator that binds to DNA sequences containing the consensus pentanucleotide 5'-CGGA[AT]-3'. Required for olfactory dopaminergic neuron differentiation; may directly activate expression of tyrosine hydroxylase (TH). In Mus musculus (Mouse), this protein is ETS translocation variant 1.